The following is a 187-amino-acid chain: ECF RNA polymerase sigma factor SigK (187 aa).

The segment at 30–96 (YDHTCTRVYG…RAVDRVRAEQ (67 aa)) is sigma-70 factor domain-2. The Interaction with polymerase core subunit RpoC motif lies at 53 to 56 (ETTQ). Positions 133 to 182 (CLDGLTDTQRQCIELAYYGGLTYAEVSQRLATNLSTIKSRMRDALRGLRN) are sigma-70 factor domain-4. The segment at residues 155-174 (YAEVSQRLATNLSTIKSRMR) is a DNA-binding region (H-T-H motif).

It belongs to the sigma-70 factor family. ECF subfamily. In terms of assembly, interacts transiently with the RNA polymerase catalytic core formed by RpoA, RpoB, RpoC and RpoZ (2 alpha, 1 beta, 1 beta' and 1 omega subunit) to form the RNA polymerase holoenzyme that can initiate transcription. Interacts (via sigma-70 factor domain 4) with anti-sigma-K factor RskA.

Its function is as follows. Sigma factors are initiation factors that promote the attachment of RNA polymerase to specific initiation sites and are then released. Extracytoplasmic function (ECF) sigma factors are held in an inactive form by an anti-sigma factor until released by regulated intramembrane proteolysis. This chain is ECF RNA polymerase sigma factor SigK (sigK), found in Mycobacterium ulcerans (strain Agy99).